A 93-amino-acid chain; its full sequence is Protein BOLA2 (93 aa).

C29 carries the post-translational modification S-glutathionyl cysteine; transient; alternate. The tract at residues 72 to 93 (KAQTPQQWKPPSQDSATLTKDA) is disordered.

It belongs to the bolA/yrbA family. Homodimer. Interacts in vitro with GRXS14, GRXS15, GRXS16 and GRXS17, but not with GRXC5. Interacts in vivo only with GRXS17. Can be either glutathionylated or forming covalent homodimers, depending on the oxidation state.

The protein localises to the cytoplasm. The protein resides in the nucleus. In terms of biological role, may act either alone or in interaction with glutaredoxin as a redox-regulated transcriptional regulator, or as a factor regulating Fe-S cluster biogenesis. The GRXS17-BOLA2 heterodimer binds a labile, oxygen sensitive iron-sulfur cluster. This Arabidopsis thaliana (Mouse-ear cress) protein is Protein BOLA2.